A 698-amino-acid chain; its full sequence is MWGRLGAFLQQAVETREPTQDLLQSFIQHWKGVTQYYLETSDESCPARETDIPWRLRQLIDILVFEESNNGSQLSSGDEEDSGAGSHAGPCMEYLLQHKILETLCTLAKAEYPPGMRQQVLLFYSRLLAKVQRPLLHYLSVHRPVQKLIALAEDPVGATAQKEELQFLTAVCTKLEKDPSLLVHVLEEGSGSRVRCSGGEQDGETEARNHKPRQNLFKALLRLCTCQKGRLCVRAREALLRVLHSAQQEGPVHLIVQSKLSQYVTEHLCELHRCIPLSIHPCDITALQETDWRKDSGSQESDGMENAEAALQRFLCWVEYCDCLVRESHEVVAMEITRSIKEGYLQGILQPELLEVSELSILRSTAILTAVLHRFTATPLLRQFLTFLFGDERGPETRGDRGSQLRSQLIQRCNHLSDEISLASLRLFEEILQMPEEIALHSLVIRNLETRSYLAGGQDESRGQESETWDGAEELEEDPYFTDGFPDTGIRLPRSDNAHRTEPAGTEQWVKSFLSLVPEEIKSSDTGYDGYLQDAIVQYRACCQQVAQWGWPVSSKGTGHSQQEFYEGHFMEVLLGRLGGILDQPYDVNLQVTSLLSRLALFPHPNLQEYLLNPFITLAPGARSLFSVLVRVVADLAQRSLRVPDLQEMLLLVRRQLLANSANEQLNHVTLCRGAVVLEEFCKELAAAACVTHSPVGF.

Belongs to the FHIP family.

The polypeptide is FHF complex subunit HOOK-interacting protein 2B (fhip2b) (Xenopus tropicalis (Western clawed frog)).